The primary structure comprises 115 residues: U2-ctenitoxin-Pn1b (115 aa).

An N-terminal signal peptide occupies residues 1–17; it reads MKVAVIILSILVLAAAS. Residues 18-61 constitute a propeptide that is removed on maturation; the sequence is ESIEEYREDFSRPNAMERSANDWIPTAPSAVERSADFAVEELER. Intrachain disulfides connect cysteine 64-cysteine 78, cysteine 71-cysteine 84, cysteine 75-cysteine 113, cysteine 77-cysteine 98, and cysteine 86-cysteine 96. A propeptide is located at residue lysine 115.

Belongs to the neurotoxin 03 (Tx2) family. 04 subfamily. Expressed by the venom gland.

It is found in the secreted. Functionally, blocks voltage-gated sodium channels (Nav). This Phoneutria nigriventer (Brazilian armed spider) protein is U2-ctenitoxin-Pn1b.